We begin with the raw amino-acid sequence, 94 residues long: HssA/B-like protein 51 (94 aa).

A disordered region spans residues 1–25; it reads MTLFSSISSISNPMTNSKSRISSFG.

Belongs to the hssA/B family.

The sequence is that of HssA/B-like protein 51 (hssl51) from Dictyostelium discoideum (Social amoeba).